The chain runs to 481 residues: Cobyric acid synthase (481 aa).

Positions alanine 248–phenylalanine 435 constitute a GATase cobBQ-type domain. Catalysis depends on cysteine 330, which acts as the Nucleophile. Histidine 427 is an active-site residue.

This sequence belongs to the CobB/CobQ family. CobQ subfamily.

Its pathway is cofactor biosynthesis; adenosylcobalamin biosynthesis. Functionally, catalyzes amidations at positions B, D, E, and G on adenosylcobyrinic A,C-diamide. NH(2) groups are provided by glutamine, and one molecule of ATP is hydrogenolyzed for each amidation. The sequence is that of Cobyric acid synthase from Cereibacter sphaeroides (strain ATCC 17025 / ATH 2.4.3) (Rhodobacter sphaeroides).